Here is a 709-residue protein sequence, read N- to C-terminus: MAKDLKFLRNIGIMAHIDAGKTTTTERILYYTGLTHKIGEVHEGGAVMDWMEQEQERGITITAAATTTFWKYPTVQGQVTKDTQQYSINIIDTPGHVDFTVEVERSLRVLDGAVALFCAVSGVEPQSETVWRQADKYRVPRICFVNKMDRAGADFFNAVSEIKSKLGANPIPLQIPIGSEDTFKGVVDLIRNQAIIWNDEDLGMTYQVVPIPEDLKETVEEYRQKLMESVAEYDEVLLEKYFNDPNTITTEEIMVAIRKAVIDMSISPVLCGASFKNKGVQALLDAVCTYLPSPLDLPPVQGTNPDTEEKQIRKPDVNEPFAALAFKIATDPFVGRLAFMRVYSGKLDGSSYVYNNRTGKKERISRLMQMHANKQNPIDSIEAGDICAAVGFKDIRTGDTLTDEKNKIILESIVFPEPVIGYSIEPKKQADVDKLSMAISKLVEEDPTLHVETNEETGQTVMKGMGELHLEIIIDRLRREFKLEINQGAPQVAYKEALTSTIEHKEVYKKQTGGRGKFADIVFELGPREDGQMGLQFTNEIVGGAIPREFIPAIQKGFAAAMANGPLASYPVESMKVKLIHGSFHEVDSDSLSFELAARIGFKEAAKKASPVIMEPIMAVEVTTPDEFTGPVTGDLNKRRGIMRGMDAKGNTQVVKADVPLSELFGYVTDLRTITSGRAAATLTFSRYEQVPKQLADSIVEKVKGTANK.

The 290-residue stretch at 6–295 folds into the tr-type G domain; sequence KFLRNIGIMA…AVCTYLPSPL (290 aa). GTP-binding positions include 15–22, 92–96, and 146–149; these read AHIDAGKT, DTPGH, and NKMD.

It belongs to the TRAFAC class translation factor GTPase superfamily. Classic translation factor GTPase family. EF-G/EF-2 subfamily.

The protein resides in the cytoplasm. Functionally, catalyzes the GTP-dependent ribosomal translocation step during translation elongation. During this step, the ribosome changes from the pre-translocational (PRE) to the post-translocational (POST) state as the newly formed A-site-bound peptidyl-tRNA and P-site-bound deacylated tRNA move to the P and E sites, respectively. Catalyzes the coordinated movement of the two tRNA molecules, the mRNA and conformational changes in the ribosome. The protein is Elongation factor G of Amoebophilus asiaticus (strain 5a2).